A 35-amino-acid chain; its full sequence is Photosystem II reaction center protein T (35 aa).

Residues 3 to 23 (ALVYTFLLVSTLGIIFFAIFF) form a helical membrane-spanning segment.

The protein belongs to the PsbT family. PSII is composed of 1 copy each of membrane proteins PsbA, PsbB, PsbC, PsbD, PsbE, PsbF, PsbH, PsbI, PsbJ, PsbK, PsbL, PsbM, PsbT, PsbY, PsbZ, Psb30/Ycf12, at least 3 peripheral proteins of the oxygen-evolving complex and a large number of cofactors. It forms dimeric complexes.

Its subcellular location is the plastid. It is found in the chloroplast thylakoid membrane. Found at the monomer-monomer interface of the photosystem II (PS II) dimer, plays a role in assembly and dimerization of PSII. PSII is a light-driven water plastoquinone oxidoreductase, using light energy to abstract electrons from H(2)O, generating a proton gradient subsequently used for ATP formation. The polypeptide is Photosystem II reaction center protein T (Amborella trichopoda).